The sequence spans 316 residues: 4-hydroxy-3-methylbut-2-enyl diphosphate reductase (316 aa).

Cysteine 12 contributes to the [4Fe-4S] cluster binding site. 2 residues coordinate (2E)-4-hydroxy-3-methylbut-2-enyl diphosphate: histidine 41 and histidine 74. 2 residues coordinate dimethylallyl diphosphate: histidine 41 and histidine 74. Isopentenyl diphosphate is bound by residues histidine 41 and histidine 74. [4Fe-4S] cluster is bound at residue cysteine 96. Histidine 124 contributes to the (2E)-4-hydroxy-3-methylbut-2-enyl diphosphate binding site. Histidine 124 serves as a coordination point for dimethylallyl diphosphate. Isopentenyl diphosphate is bound at residue histidine 124. Glutamate 126 (proton donor) is an active-site residue. Residue threonine 167 participates in (2E)-4-hydroxy-3-methylbut-2-enyl diphosphate binding. Cysteine 197 serves as a coordination point for [4Fe-4S] cluster. (2E)-4-hydroxy-3-methylbut-2-enyl diphosphate is bound by residues serine 225, serine 226, asparagine 227, and serine 269. Serine 225, serine 226, asparagine 227, and serine 269 together coordinate dimethylallyl diphosphate. Isopentenyl diphosphate-binding residues include serine 225, serine 226, asparagine 227, and serine 269.

Belongs to the IspH family. In terms of assembly, homodimer. [4Fe-4S] cluster is required as a cofactor.

It catalyses the reaction isopentenyl diphosphate + 2 oxidized [2Fe-2S]-[ferredoxin] + H2O = (2E)-4-hydroxy-3-methylbut-2-enyl diphosphate + 2 reduced [2Fe-2S]-[ferredoxin] + 2 H(+). The enzyme catalyses dimethylallyl diphosphate + 2 oxidized [2Fe-2S]-[ferredoxin] + H2O = (2E)-4-hydroxy-3-methylbut-2-enyl diphosphate + 2 reduced [2Fe-2S]-[ferredoxin] + 2 H(+). It functions in the pathway isoprenoid biosynthesis; dimethylallyl diphosphate biosynthesis; dimethylallyl diphosphate from (2E)-4-hydroxy-3-methylbutenyl diphosphate: step 1/1. It participates in isoprenoid biosynthesis; isopentenyl diphosphate biosynthesis via DXP pathway; isopentenyl diphosphate from 1-deoxy-D-xylulose 5-phosphate: step 6/6. Its function is as follows. Catalyzes the conversion of 1-hydroxy-2-methyl-2-(E)-butenyl 4-diphosphate (HMBPP) into a mixture of isopentenyl diphosphate (IPP) and dimethylallyl diphosphate (DMAPP). Acts in the terminal step of the DOXP/MEP pathway for isoprenoid precursor biosynthesis. This chain is 4-hydroxy-3-methylbut-2-enyl diphosphate reductase, found in Salmonella paratyphi C (strain RKS4594).